The chain runs to 432 residues: G-protein coupled receptor 22 (432 aa).

At 1–45 the chain is on the cytoplasmic side; the sequence is MCFSPVLEINMQSESNVTVRDDIEDIDTNMYQPLSYPLSFQVSLT. The helical transmembrane segment at 46 to 66 threads the bilayer; sequence GFLMLEIVLGLGSNLTVLVLY. Residues 67–85 are Extracellular-facing; that stretch reads CMKSNLISSVSNIITMNLH. A helical transmembrane segment spans residues 86-106; it reads VLDVIICVGCIPLTIVILLLS. Over 107–115 the chain is Cytoplasmic; sequence LERNTALIC. The helical transmembrane segment at 116-136 threads the bilayer; the sequence is CFHEACVSFASVSTAINVFAI. Topologically, residues 137 to 156 are extracellular; that stretch reads TLDRYDISVKPANRILTMGR. Residues 157-177 form a helical membrane-spanning segment; the sequence is AVMLMTSIWIFSFFSFLIPFI. The Cytoplasmic segment spans residues 178–208; the sequence is EVNFFSLQSGNAWENKTLLCVSTSEYYTELG. Residues 209–229 form a helical membrane-spanning segment; the sequence is MYYHLLVQIPIFFFTVIVMLI. Residues 230-314 lie on the Extracellular side of the membrane; the sequence is TYTKILQALN…ERQKRVFKMS (85 aa). A helical transmembrane segment spans residues 315–335; sequence LLIISTFLLCWTPISVLNTTI. Topologically, residues 336–348 are cytoplasmic; that stretch reads LCLGPSDLLVKLR. A helical membrane pass occupies residues 349-369; the sequence is LCFLVMAYGTTIFHPLLYAFT. Residues 370–432 lie on the Extracellular side of the membrane; sequence RQKFQKVLKS…KCLVPQVVTD (63 aa).

The protein belongs to the G-protein coupled receptor 1 family. In terms of tissue distribution, abundant levels detected in the brain. High expression in the heart (at protein level). No detectable expression in other peripheral tissues.

It is found in the cell membrane. In terms of biological role, orphan G-protein coupled receptor. Seems to act through a G(i)/G(o) mediated pathway. May be involved in ciliogenesis. The sequence is that of G-protein coupled receptor 22 from Rattus norvegicus (Rat).